The following is a 1771-amino-acid chain: Gag-Pro-Pol polyprotein (1771 aa).

Glycine 2 is lipidated: N-myristoyl glycine; by host. The propeptide occupies alanine 101–leucine 161. Polar residues-rich tracts occupy residues asparagine 113–proline 125 and lysine 140–threonine 152. The interval asparagine 113–valine 178 is disordered. The PPXY motif motif lies at proline 202–tyrosine 205. The PTAP/PSAP motif signature appears at proline 210–proline 213. The stretch at methionine 216–glutamate 257 forms a coiled coil. Residues threonine 260–isoleucine 279 are disordered. The PTAP/PSAP motif motif lies at alanine 335–proline 338. 2 CCHC-type zinc fingers span residues glycine 547–glutamate 564 and glycine 576–serine 593. The segment at lysine 592 to leucine 626 is disordered. The 77-residue stretch at phenylalanine 780–leucine 856 folds into the Peptidase A2 domain. Catalysis depends on aspartate 785, which acts as the Protease; shared with dimeric partner. The 47-residue stretch at proline 867–threonine 913 folds into the G-patch domain. One can recognise a Reverse transcriptase domain in the interval leucine 959–leucine 1147. 7 residues coordinate Mg(2+): aspartate 1024, aspartate 1099, aspartate 1100, aspartate 1370, glutamate 1399, aspartate 1420, and aspartate 1484. The region spanning leucine 1361 to serine 1492 is the RNase H type-1 domain. The segment at threonine 1496–valine 1537 adopts an Integrase-type zinc-finger fold. 4 residues coordinate Zn(2+): histidine 1505, histidine 1509, cysteine 1533, and cysteine 1536. Positions arginine 1550 to lysine 1719 constitute an Integrase catalytic domain. Mg(2+)-binding residues include aspartate 1561, aspartate 1618, and glutamate 1654. The integrase-type DNA-binding region spans alanine 1716–asparagine 1765.

The protein belongs to the retroviral Pol polyprotein family. Homodimer. As to quaternary structure, interacts with the G-patch peptide. In terms of assembly, interacts with the reverse transcriptase/ribonuclease H. Homotrimer. Requires Mg(2+) as cofactor. Post-translationally, released by autocatalytic processing. The protease can undergo further autoprocessing to yield 2 shorter but enzymatically active forms of 12 kDa and 13 kDa. Myristoylated. Myristoylation of the matrix (MA) domain mediates the transport and binding of Gag polyproteins to the host plasma membrane and is required for the assembly of viral particles. In terms of processing, specific enzymatic cleavages in vivo yield mature proteins.

It is found in the virion. It carries out the reaction DNA(n) + a 2'-deoxyribonucleoside 5'-triphosphate = DNA(n+1) + diphosphate. The enzyme catalyses Endonucleolytic cleavage to 5'-phosphomonoester.. The catalysed reaction is dUTP + H2O = dUMP + diphosphate + H(+). Its function is as follows. Matrix protein. Nucleocapsid protein p14: Nucleocapsid protein. In terms of biological role, capsid protein. Functionally, the aspartyl protease mediates proteolytic cleavages of Gag and Gag-Pol polyproteins during or shortly after the release of the virion from the plasma membrane. Cleavages take place as an ordered, step-wise cascade to yield mature proteins. This process is called maturation. Displays maximal activity during the budding process just prior to particle release from the cell. Its function is as follows. Enhances the activity of the reverse transcriptase. May be part of the mature RT. RT is a multifunctional enzyme that converts the viral dimeric RNA genome into dsDNA in the cytoplasm, shortly after virus entry into the cell. This enzyme displays a DNA polymerase activity that can copy either DNA or RNA templates, and a ribonuclease H (RNase H) activity that cleaves the RNA strand of RNA-DNA heteroduplexes in a partially processive 3' to 5' endonucleasic mode. Conversion of viral genomic RNA into dsDNA requires many steps. A tRNA binds to the primer-binding site (PBS) situated at the 5' end of the viral RNA. RT uses the 3' end of the tRNA primer to perfom a short round of RNA-dependent minus-strand DNA synthesis. The reading proceeds through the U5 region and ends after the repeated (R) region which is present at both ends of viral RNA. The portion of the RNA-DNA heteroduplex is digested by the RNase H, resulting in a ssDNA product attached to the tRNA primer. This ssDNA/tRNA hybridizes with the identical R region situated at the 3' end of viral RNA. This template exchange, known as minus-strand DNA strong stop transfer, can be either intra- or intermolecular. RT uses the 3' end of this newly synthesized short ssDNA to perfom the RNA-dependent minus-strand DNA synthesis of the whole template. RNase H digests the RNA template except for a polypurine tract (PPT) situated at the 5' end of the genome. It is not clear if both polymerase and RNase H activities are simultaneous. RNase H probably can proceed both in a polymerase-dependent (RNA cut into small fragments by the same RT performing DNA synthesis) and a polymerase-independent mode (cleavage of remaining RNA fragments by free RTs). Secondly, RT performs DNA-directed plus-strand DNA synthesis using the PPT that has not been removed by RNase H as primers. PPT and tRNA primers are then removed by RNase H. The 3' and 5' ssDNA PBS regions hybridize to form a circular dsDNA intermediate. Strand displacement synthesis by RT to the PBS and PPT ends produces a blunt ended, linear dsDNA copy of the viral genome that includes long terminal repeats (LTRs) at both ends. In terms of biological role, catalyzes viral DNA integration into the host chromosome, by performing a series of DNA cutting and joining reactions. This is Gag-Pro-Pol polyprotein (gag-pro-pol) from Macaca mulatta (Rhesus macaque).